We begin with the raw amino-acid sequence, 543 residues long: Protein DETOXIFICATION 47, chloroplastic (543 aa).

The N-terminal 30 residues, 1 to 30, are a transit peptide targeting the chloroplast; sequence MLIKSQRLTLFSPLLSKTRRIPVNSHQTLV. Residues 55-94 adopt a coiled-coil conformation; the sequence is VIRRRIKLERVTRNCVRIDREIDEEEEEEEKERGDLVKQS. Helical transmembrane passes span 107–127, 135–155, 181–201, 228–248, 256–276, 278–298, 319–339, 342–362, 406–426, 443–463, 472–492, and 497–517; these read GPAM…TVVI, LAAL…FMFL, VLLF…RLFG, GLAW…LGMK, ALAA…LFLG, GIAG…YMMM, LWKI…KIAF, FIIY…QVMA, IIGA…PGLF, LLIP…LEGT, FVSS…MFVT, and GLLG…GLYL.

Belongs to the multi antimicrobial extrusion (MATE) (TC 2.A.66.1) family. In terms of tissue distribution, preferentially expressed in the epidermal cells.

It is found in the plastid. The protein localises to the chloroplast membrane. Functionally, functions as a multidrug and toxin extrusion transporter in the export of salicylic acid (SA) from the chloroplast to the cytoplasm. Plays an essential function in plant defense via the pathogen-induced salicylic acid (SA) accumulation. Also acts as a key component of the Age-related resistance (ARR) pathway. This is Protein DETOXIFICATION 47, chloroplastic from Arabidopsis thaliana (Mouse-ear cress).